We begin with the raw amino-acid sequence, 350 residues long: Pleckstrin (350 aa).

In terms of domain architecture, PH 1 spans 4–101; it reads KRIREGYLVK…WVRDIKKAIK (98 aa). Lys64 carries the N6-acetyllysine modification. 2 positions are modified to phosphoserine: Ser113 and Ser117. A DEP domain is found at 136-221; that stretch reads PEKGIKELNL…SPDAFYYFPD (86 aa). The region spanning 244 to 347 is the PH 2 domain; it reads VIIKQGCLLK…WIKAIQVASR (104 aa).

Its function is as follows. Major protein kinase C substrate of platelets. The sequence is that of Pleckstrin (Plek) from Mus musculus (Mouse).